The chain runs to 207 residues: Glycerol-3-phosphate acyltransferase (207 aa).

6 consecutive transmembrane segments (helical) span residues 7–27, 58–78, 83–103, 116–136, 141–161, and 166–186; these read YALA…LVIV, LATF…FTLL, VGFV…WLGF, LAFV…LGLF, ISSL…WLMG, and LILA…RENI.

This sequence belongs to the PlsY family. In terms of assembly, probably interacts with PlsX.

Its subcellular location is the cell inner membrane. The catalysed reaction is an acyl phosphate + sn-glycerol 3-phosphate = a 1-acyl-sn-glycero-3-phosphate + phosphate. It functions in the pathway lipid metabolism; phospholipid metabolism. Its function is as follows. Catalyzes the transfer of an acyl group from acyl-phosphate (acyl-PO(4)) to glycerol-3-phosphate (G3P) to form lysophosphatidic acid (LPA). This enzyme utilizes acyl-phosphate as fatty acyl donor, but not acyl-CoA or acyl-ACP. This is Glycerol-3-phosphate acyltransferase from Hyphomonas neptunium (strain ATCC 15444).